The chain runs to 266 residues: Apolipoprotein A-I (266 aa).

The signal sequence occupies residues Met-1–Ala-18. 2 consecutive repeat copies span residues Leu-67–Gly-88 and Pro-89–Ser-110. Positions Leu-67 to Gln-266 are 10 X approximate tandem repeats. The residue at position 109 (Met-109) is a Methionine sulfoxide. Residues Lys-111 to Gln-121 form a 3; half-length repeat. Tandem repeats lie at residues Pro-122 to Ala-143, Pro-144 to Ser-165, Pro-166 to Ala-187, Pro-188 to Gly-209, and Ala-210 to Lys-231. The 9; half-length repeat unit spans residues Pro-232–Leu-242. The stretch at Pro-243–Gln-266 is repeat 10.

Belongs to the apolipoprotein A1/A4/E family. In terms of assembly, homodimer. Interacts with APOA1BP and CLU. Component of a sperm activating protein complex (SPAP), consisting of APOA1, an immunoglobulin heavy chain, an immunoglobulin light chain and albumin. Interacts with NDRG1. Interacts with SCGB3A2. Interacts with NAXE and YJEFN3. In terms of processing, glycosylated. Post-translationally, palmitoylated. Phosphorylation sites are present in the extracellular medium.

Its subcellular location is the secreted. Its function is as follows. Participates in the reverse transport of cholesterol from tissues to the liver for excretion by promoting cholesterol efflux from tissues and by acting as a cofactor for the lecithin cholesterol acyltransferase (LCAT). As part of the SPAP complex, activates spermatozoa motility. This is Apolipoprotein A-I (APOA1) from Acinonyx jubatus (Cheetah).